Here is a 267-residue protein sequence, read N- to C-terminus: Undecaprenyl-diphosphatase 2 (267 aa).

8 helical membrane passes run 4 to 24, 43 to 63, 84 to 104, 109 to 129, 147 to 167, 186 to 206, 219 to 239, and 243 to 263; these read IYFI…FLPI, EEKV…CWLF, FAVI…LFIH, VLFN…IILW, IGFK…IPGT, AATE…AIYD, ILAI…VVNA, and FVAK…GLII.

Belongs to the UppP family.

The protein resides in the cell inner membrane. It carries out the reaction di-trans,octa-cis-undecaprenyl diphosphate + H2O = di-trans,octa-cis-undecaprenyl phosphate + phosphate + H(+). Catalyzes the dephosphorylation of undecaprenyl diphosphate (UPP). Confers resistance to bacitracin. The sequence is that of Undecaprenyl-diphosphatase 2 from Shewanella oneidensis (strain ATCC 700550 / JCM 31522 / CIP 106686 / LMG 19005 / NCIMB 14063 / MR-1).